We begin with the raw amino-acid sequence, 162 residues long: UPF0114 protein VCM66_0196 (162 aa).

The next 4 membrane-spanning stretches (helical) occupy residues 15–35 (IMAPIYLGLSLLLLALGIKFF), 53–73 (LILVALSLIDVSLVGGLIVMV), 109–126 (VSASIVAISSIHLLKVFM), and 136–156 (IKWYLLLHITFVVSAFAMGYL).

This sequence belongs to the UPF0114 family.

It localises to the cell membrane. This Vibrio cholerae serotype O1 (strain M66-2) protein is UPF0114 protein VCM66_0196.